We begin with the raw amino-acid sequence, 173 residues long: Shikimate kinase (173 aa).

Position 12–17 (12–17 (GSGKTT)) interacts with ATP. Residue Thr-16 participates in Mg(2+) binding. Asp-34, Arg-58, and Gly-80 together coordinate substrate. Arg-118 is a binding site for ATP. Arg-136 is a binding site for substrate.

Belongs to the shikimate kinase family. As to quaternary structure, monomer. Mg(2+) is required as a cofactor.

Its subcellular location is the cytoplasm. It carries out the reaction shikimate + ATP = 3-phosphoshikimate + ADP + H(+). It functions in the pathway metabolic intermediate biosynthesis; chorismate biosynthesis; chorismate from D-erythrose 4-phosphate and phosphoenolpyruvate: step 5/7. In terms of biological role, catalyzes the specific phosphorylation of the 3-hydroxyl group of shikimic acid using ATP as a cosubstrate. This is Shikimate kinase from Moorella thermoacetica (strain ATCC 39073 / JCM 9320).